A 337-amino-acid chain; its full sequence is MADFWGGYLWPAIIIVLQCLAIILPMLGAIAYLTYAERKVIGAMQMRKGPNVVGPFGLLQPLADGVKLFLKETIIPTGANRAVFIIAPLMTFILALIAWAVIPFDAGWVVADINVGVLYLFAVSGLGVYGIIMAGWASNSKYAFLGGLRSAAQMVSYEVAMGLIIIAVILSAGSMNLSDIVEAQRQGVWYFIPHFPMFVMFLVSILAETNRAPFDLPEAEAELVSGYNVEYSAMPFALFFLGEYGNMILMSGITAILFLGGWLPPVDIAPFNWIPGIIWFFLKIALILFVFLWVRATFPRYRYDQLMRLGWKVFLPGSLIWVVLTAGFLVTFDMLPR.

A run of 8 helical transmembrane segments spans residues 13-33 (IIIV…IAYL), 82-102 (AVFI…WAVI), 115-135 (VGVL…IMAG), 154-174 (MVSY…SAGS), 187-207 (GVWY…SILA), 248-268 (ILMS…PVDI), 274-294 (IPGI…FLWV), and 313-333 (VFLP…VTFD).

It belongs to the complex I subunit 1 family. NDH-1 is composed of 14 different subunits. Subunits NuoA, H, J, K, L, M, N constitute the membrane sector of the complex.

It is found in the cell inner membrane. The catalysed reaction is a quinone + NADH + 5 H(+)(in) = a quinol + NAD(+) + 4 H(+)(out). NDH-1 shuttles electrons from NADH, via FMN and iron-sulfur (Fe-S) centers, to quinones in the respiratory chain. The immediate electron acceptor for the enzyme in this species is believed to be ubiquinone. Couples the redox reaction to proton translocation (for every two electrons transferred, four hydrogen ions are translocated across the cytoplasmic membrane), and thus conserves the redox energy in a proton gradient. This subunit may bind ubiquinone. The polypeptide is NADH-quinone oxidoreductase subunit H (Rhodospirillum rubrum (strain ATCC 11170 / ATH 1.1.1 / DSM 467 / LMG 4362 / NCIMB 8255 / S1)).